We begin with the raw amino-acid sequence, 190 residues long: Transcription factor E (190 aa).

The HTH TFE/IIEalpha-type domain maps to 4 to 87 (KNKALLEIAK…YWHLETKRLP (84 aa)). The tract at residues 170–190 (PSPKKEKKKTRAKAKRKTRKK) is disordered. Residues 174–190 (KEKKKTRAKAKRKTRKK) are compositionally biased toward basic residues.

It belongs to the TFE family. In terms of assembly, monomer. Interaction with RNA polymerase subunits RpoF and RpoE is necessary for Tfe stimulatory transcription activity. Able to interact with Tbp and RNA polymerase in the absence of DNA promoter. Interacts both with the preinitiation and elongation complexes.

In terms of biological role, transcription factor that plays a role in the activation of archaeal genes transcribed by RNA polymerase. Facilitates transcription initiation by enhancing TATA-box recognition by TATA-box-binding protein (Tbp), and transcription factor B (Tfb) and RNA polymerase recruitment. Not absolutely required for transcription in vitro, but particularly important in cases where Tbp or Tfb function is not optimal. It dynamically alters the nucleic acid-binding properties of RNA polymerases by stabilizing the initiation complex and destabilizing elongation complexes. Seems to translocate with the RNA polymerase following initiation and acts by binding to the non template strand of the transcription bubble in elongation complexes. In Pyrococcus abyssi (strain GE5 / Orsay), this protein is Transcription factor E.